We begin with the raw amino-acid sequence, 185 residues long: dCTP deaminase (185 aa).

Residues 107–112, 131–133, Q152, Y166, and Q176 each bind dCTP; these read KSTYAR and TLE. E133 serves as the catalytic Proton donor/acceptor.

This sequence belongs to the dCTP deaminase family. In terms of assembly, homotrimer.

The catalysed reaction is dCTP + H2O + H(+) = dUTP + NH4(+). It participates in pyrimidine metabolism; dUMP biosynthesis; dUMP from dCTP (dUTP route): step 1/2. Functionally, catalyzes the deamination of dCTP to dUTP. The chain is dCTP deaminase from Wolbachia pipientis wMel.